The primary structure comprises 1690 residues: rRNA biogenesis protein rrp5 (1690 aa).

2 disordered regions span residues 1–42 and 59–90; these read MAGN…GASS and FMES…ELDN. The span at 11–32 shows a compositional bias: polar residues; that stretch reads ASEGSDSQGNERISSLSANEAT. Residues 72–83 show a composition bias toward basic residues; that stretch reads KTRPKKKGSKKS. 13 S1 motif domains span residues 109–209, 226–289, 306–376, 398–473, 490–559, 579–648, 666–739, 761–830, 866–942, 973–1044, 1053–1122, 1147–1216, and 1236–1307; these read GSLI…LSLK, GSMI…LTAT, GDYI…VSFL, GFIV…LSFQ, GQFV…LTLK, GTQT…VGCR, GSVL…LSLK, GIKY…MSFK, GKIT…ISHR, GDEV…IGPL, GSRL…LSAR, GDIC…MSLK, and GSNL…LGLK. The tract at residues 1313–1424 is disordered; the sequence is SDSDISMSDN…EEKDLDEIPS (112 aa). Acidic residues-rich tracts occupy residues 1348–1367, 1390–1400, and 1412–1421; these read QSEE…EEEP, DTEDSEDEEDE, and FDDEEKDLDE. Phosphothreonine is present on T1391. S1394 is modified (phosphoserine). HAT repeat units lie at residues 1420–1452, 1526–1558, and 1596–1628; these read DEIP…YHLN, GKVD…FLLN, and GDPE…MEMK. Phosphoserine is present on residues S1684 and S1686.

As to quaternary structure, component of the ribosomal small subunit (SSU) processome.

The protein localises to the nucleus. The protein resides in the nucleolus. In terms of biological role, involved in the biogenesis of rRNA. Required for the formation of 18S and 5.8S rRNA. The polypeptide is rRNA biogenesis protein rrp5 (Schizosaccharomyces pombe (strain 972 / ATCC 24843) (Fission yeast)).